The chain runs to 692 residues: Elongation factor G (692 aa).

Positions 8-283 (EDYRNFGIMA…AVVDYLPSPV (276 aa)) constitute a tr-type G domain. Residues 17 to 24 (AHIDAGKT), 81 to 85 (DTPGH), and 135 to 138 (NKMD) contribute to the GTP site.

It belongs to the TRAFAC class translation factor GTPase superfamily. Classic translation factor GTPase family. EF-G/EF-2 subfamily.

The protein resides in the cytoplasm. Catalyzes the GTP-dependent ribosomal translocation step during translation elongation. During this step, the ribosome changes from the pre-translocational (PRE) to the post-translocational (POST) state as the newly formed A-site-bound peptidyl-tRNA and P-site-bound deacylated tRNA move to the P and E sites, respectively. Catalyzes the coordinated movement of the two tRNA molecules, the mRNA and conformational changes in the ribosome. The polypeptide is Elongation factor G (Caulobacter vibrioides (strain ATCC 19089 / CIP 103742 / CB 15) (Caulobacter crescentus)).